We begin with the raw amino-acid sequence, 331 residues long: MLSPERLALPDYEYLAQRHVLTYMEDAVCQLLENKEDISQYGIARFFTEYFNSVCQGTHILFREFSFIQATPHNRASFLRAFWRCFRTVGKNGDLLTMREYHCLLQLLCPDFPLELTQKAARIVLMDDAMDCLMSFSDFLFAFQIQFYYSEFLESVAAIYQDLLSGKNPNTVIVPTSSSGQHRQRPALGDAGMLDGVEASLFCQRLENLCDRHKYSCPPPALVKEILSNVQRLTFYGFLVALSKHHGINQALGALPDKGDLMHDPAMDEELERLLVQVPGLVNSITATSEASCLPSRTPPRVGSPWKPLHRSRKLDAESDGSTEETDESET.

Residues 1–111 (MLSPERLALP…HCLLQLLCPD (111 aa)) are required for interaction with PCM1. The tract at residues 1–225 (MLSPERLALP…SCPPPALVKE (225 aa)) is required for interaction with TPGS1, LRRC49, and TTLL1. Residues 112–331 (FPLELTQKAA…STEETDESET (220 aa)) are required for interaction with TPGS2. Positions 292-331 (SCLPSRTPPRVGSPWKPLHRSRKLDAESDGSTEETDESET) are disordered. Acidic residues predominate over residues 318 to 331 (ESDGSTEETDESET). S319 is subject to Phosphoserine.

It belongs to the CSTPP1 family. As to quaternary structure, interacts with PCM1. Interacts with TTLL1, TPGS1, TPGS2 and LRRC49; the interactions link CSTPP1 to the complex TPGC. Binds to alpha-tubulin.

It is found in the cytoplasm. The protein localises to the cytoskeleton. Its subcellular location is the microtubule organizing center. It localises to the centrosome. The protein resides in the centriolar satellite. In terms of biological role, regulator of the tubulin polyglutamylase complex (TPGC) that controls cytoskeletal organization, nuclear shape, and cilium disassembly by balancing microtubule and actin assembly. Regulates the assembly and stability of the TPGC and thereby modulates polyglutamylation of the microtubule, which antagonizes MAP4 binding. This is Centriolar satellite-associated tubulin polyglutamylase complex regulator 1 (Cstpp1) from Rattus norvegicus (Rat).